The following is a 539-amino-acid chain: Chaperonin GroEL (539 aa).

ATP-binding positions include 30 to 33 (TLGP), Lys51, 87 to 91 (DGTTT), Gly415, and Asp495.

Belongs to the chaperonin (HSP60) family. Forms a cylinder of 14 subunits composed of two heptameric rings stacked back-to-back. Interacts with the co-chaperonin GroES.

It is found in the cytoplasm. It catalyses the reaction ATP + H2O + a folded polypeptide = ADP + phosphate + an unfolded polypeptide.. Functionally, together with its co-chaperonin GroES, plays an essential role in assisting protein folding. The GroEL-GroES system forms a nano-cage that allows encapsulation of the non-native substrate proteins and provides a physical environment optimized to promote and accelerate protein folding. This is Chaperonin GroEL from Serratia rubidaea (Serratia marinorubra).